The following is a 640-amino-acid chain: Preterminal protein (640 aa).

The disordered stretch occupies residues 232 to 257; sequence PSQEGEGEERENPDRASSRPRPQETV. Residues 351-360 carry the Nuclear localization signal motif; it reads RLPVRRRRRR. Ser549 carries the post-translational modification O-(5'-phospho-DNA)-serine. Residues 614–640 are disordered; the sequence is GADVPLPAMPPGPEPPLPPGARPRHRF. Over residues 620–634 the composition is skewed to pro residues; that stretch reads PAMPPGPEPPLPPGA.

Belongs to the adenoviridae terminal protein family. As to quaternary structure, heterodimer with the polymerase; this heterodimer binds to bp 9 to 18 of the genome. Interacts with host POU2F1; POU2F1 binds to the auxiliary sequences in the inverted terminal repeats and tethers the pTP-POL heterodimer to the origin DNA thereby participating in the assembly of the pre-initiation complex (POL-TP-DBP-NFIA-POU2F1). Post-translationally, preterminal protein is used to replicate viral genome, upon genomic encapsidation it is processed first into iTP and finally into TP by adenovirus protease.

It is found in the host nucleus matrix. Its function is as follows. Protein covalently bound to the viral DNA that acts as a primer for viral genomic replication by DNA strand displacement. Assembles on the viral origin of replication in an initiation complex with viral polymerase, DBP, host NFIA and host POU2F1/OCT1. During initiation, the polymerase covalently couples the first dCTP with Ser-580 of pTP. The terminal protein stimulates the template activity over 20 fold compared to protein-free templates. Neo-synthesized viral genomes are linked to two preterminal proteins, one for each 5' end. These new genomes are encapsidated in the nucleus, and during capsid maturation by viral protease, preterminal protein is first cleaved into intermediary (iTP), then into mature TP. May play a role in host nuclear matrix localization of genomic DNA. The protein is Preterminal protein of Human adenovirus B serotype 7 (HAdV-7).